The primary structure comprises 538 residues: Atos homolog protein B (538 aa).

A compositionally biased stretch (low complexity) spans 1–18; it reads MRHVQAEPSPSSEPEAGP. Disordered stretches follow at residues 1–103, 153–185, 197–300, and 323–342; these read MRHV…GLLG, NTLH…QLHT, GGKS…VLDP, and SLRK…VPTP. Over residues 227–238 the composition is skewed to pro residues; it reads HTPPGPGPPGPC. A phosphoserine mark is found at S254 and S255. Positions 323–334 are enriched in low complexity; the sequence is SLRKGPGLLSPP. A required for macropage invasion region spans residues 348–430; the sequence is LLGSFEESLL…VPKVGTIQVT (83 aa). The transactivation domain 1 (TAD1) stretch occupies residues 436-444; that stretch reads QTVVKMFLV.

This sequence belongs to the ATOS family.

It is found in the nucleus. Its function is as follows. Transcription regulator that may syncronize transcriptional and translational programs. The polypeptide is Atos homolog protein B (Pongo abelii (Sumatran orangutan)).